We begin with the raw amino-acid sequence, 140 residues long: Ribonuclease P protein component (140 aa).

It belongs to the RnpA family. As to quaternary structure, consists of a catalytic RNA component (M1 or rnpB) and a protein subunit.

The catalysed reaction is Endonucleolytic cleavage of RNA, removing 5'-extranucleotides from tRNA precursor.. In terms of biological role, RNaseP catalyzes the removal of the 5'-leader sequence from pre-tRNA to produce the mature 5'-terminus. It can also cleave other RNA substrates such as 4.5S RNA. The protein component plays an auxiliary but essential role in vivo by binding to the 5'-leader sequence and broadening the substrate specificity of the ribozyme. In Ralstonia pickettii (strain 12J), this protein is Ribonuclease P protein component.